Reading from the N-terminus, the 521-residue chain is Lymphocyte activation gene 3 protein (521 aa).

A signal peptide spans 1-23 (MREDLLLGFLLLGLLWEAPVVSS). The Extracellular segment spans residues 24–442 (GPGKELPVVW…ISGDLKGGHL (419 aa)). The Ig-like V-type domain maps to 37-163 (GAPVHLPCSL…LSCSLRLRVG (127 aa)). An interaction with FGL1 region spans residues 37-246 (GAPVHLPCSL…LTYRDGFNVS (210 aa)). The cysteines at positions 44 and 156 are disulfide-linked. Ig-like C2-type domains follow at residues 165–246 (ASMI…FNVS), 258–341 (PVAP…ATVT), and 345–412 (ITVT…EGQR). Asn-184 is a glycosylation site (N-linked (GlcNAc...) asparagine). Cys-185 and Cys-235 form a disulfide bridge. N-linked (GlcNAc...) asparagine glycans are attached at residues Asn-244, Asn-309, Asn-337, and Asn-381. An intrachain disulfide couples Cys-276 to Cys-327. Residues Cys-363 and Cys-405 are joined by a disulfide bond. Residues 422–442 (ESSSGAHSARRISGDLKGGHL) are connecting peptide. The chain crosses the membrane as a helical span at residues 443–463 (VLVLILGALSLFLLVAGAFGF). The Cytoplasmic segment spans residues 464–521 (HWWRKQLLLRRFSALEHGIQPFPAQRKIEELERELETEMGQEPEPEPEPQLEPEPRQL). The KIEELE motif signature appears at 490–495 (KIEELE). Residues 493-518 (ELERELETEMGQEPEPEPEPQLEPEP) are 13 X 2 AA tandem repeats of E-X. Residues 493–521 (ELERELETEMGQEPEPEPEPQLEPEPRQL) are disordered. Over residues 500–514 (TEMGQEPEPEPEPQL) the composition is skewed to acidic residues.

This sequence belongs to the LAG3 family. Interacts with MHC class II (MHC-II); selectively recognizes stable complexes of peptide and MHC-II. Interacts with FGL1 (via the Fibrinogen C-terminal domain). In terms of processing, proteolytically cleaved by ADAM10 and ADAM17 within the connecting peptide region, leading to release of Secreted lymphocyte activation gene 3 protein (sLAG-3). ADAM10 mediates constitutive cleavage, but cleavage increases following T-cell activation, whereas shedding by ADAM17 is induced by TCR signaling in a PRKCQ-dependent manner. Primarily expressed in activated CD4(+) and CD8(+) T-cells. Also expressed in a subset of regulatory T-cells (Tregs), such as natural CD4(+)CD25(+) Tregs. Also expressed on plasmacytoid dendritic cells (pDCs).

The protein localises to the cell membrane. It localises to the secreted. Its function is as follows. Lymphocyte activation gene 3 protein: Inhibitory receptor on antigen activated T-cells. Delivers inhibitory signals upon binding to ligands, such as FGL1. FGL1 constitutes a major ligand of LAG3 and is responsible for LAG3 T-cell inhibitory function. Following TCR engagement, LAG3 associates with CD3-TCR in the immunological synapse and directly inhibits T-cell activation. May inhibit antigen-specific T-cell activation in synergy with PDCD1/PD-1, possibly by acting as a coreceptor for PDCD1/PD-1. Negatively regulates the proliferation, activation, effector function and homeostasis of both CD8(+) and CD4(+) T-cells. Also mediates immune tolerance: constitutively expressed on a subset of regulatory T-cells (Tregs) and contributes to their suppressive function. Also acts as a negative regulator of plasmacytoid dendritic cell (pDCs) activation. Binds MHC class II (MHC-II); the precise role of MHC-II-binding is however unclear. Functionally, may function as a ligand for MHC class II (MHC-II) on antigen-presenting cells (APC), promoting APC activation/maturation and driving Th1 immune response. This is Lymphocyte activation gene 3 protein from Mus musculus (Mouse).